The following is a 168-amino-acid chain: Sec-independent protein translocase protein TatB (168 aa).

A helical membrane pass occupies residues 1–21 (MIDLGISKLALIGAVALIVIG). Disordered regions lie at residues 92-132 (FDGS…QGAR) and 146-168 (VQSG…SFFE). Over residues 94-107 (GSASSSSSSDTGSG) the composition is skewed to low complexity. Positions 117–126 (KSHNGRKSWR) are enriched in basic residues.

It belongs to the TatB family. As to quaternary structure, the Tat system comprises two distinct complexes: a TatABC complex, containing multiple copies of TatA, TatB and TatC subunits, and a separate TatA complex, containing only TatA subunits. Substrates initially bind to the TatABC complex, which probably triggers association of the separate TatA complex to form the active translocon.

The protein resides in the cell inner membrane. Part of the twin-arginine translocation (Tat) system that transports large folded proteins containing a characteristic twin-arginine motif in their signal peptide across membranes. Together with TatC, TatB is part of a receptor directly interacting with Tat signal peptides. TatB may form an oligomeric binding site that transiently accommodates folded Tat precursor proteins before their translocation. This Cupriavidus metallidurans (strain ATCC 43123 / DSM 2839 / NBRC 102507 / CH34) (Ralstonia metallidurans) protein is Sec-independent protein translocase protein TatB.